We begin with the raw amino-acid sequence, 267 residues long: Hydroxyethylthiazole kinase (267 aa).

Met42 lines the substrate pocket. ATP contacts are provided by Cys118 and Thr162. Gly189 is a binding site for substrate.

The protein belongs to the Thz kinase family. Mg(2+) serves as cofactor.

It carries out the reaction 5-(2-hydroxyethyl)-4-methylthiazole + ATP = 4-methyl-5-(2-phosphooxyethyl)-thiazole + ADP + H(+). Its pathway is cofactor biosynthesis; thiamine diphosphate biosynthesis; 4-methyl-5-(2-phosphoethyl)-thiazole from 5-(2-hydroxyethyl)-4-methylthiazole: step 1/1. Functionally, catalyzes the phosphorylation of the hydroxyl group of 4-methyl-5-beta-hydroxyethylthiazole (THZ). The chain is Hydroxyethylthiazole kinase from Rubrobacter xylanophilus (strain DSM 9941 / JCM 11954 / NBRC 16129 / PRD-1).